We begin with the raw amino-acid sequence, 876 residues long: MDPAPSLGCSLKDVKWSSVAVPLDLLVSTYRLPQIARLDNGECVEGLRENDYLLIHSCRQWTTITAHSLEEGHYVIGPKIEIPVHYAGQFKLLEQDRDIKEPVQYFNSVEEVAKAFPERVYVMEDITFNVKVASGECNEDTEVYNITLCTGDELTLMGQAEILYAKTFKEKSRLNTIFKKIGKLNSISKLGKGKMPCLICMNHRTNESISLPFQCKGRFSTRSPLELQMQEGEHTIRNIVEKTRLPVNVTVPSPPPRNPYDLHFIREGHRYKFVNIQTKTVVVCCVLRNNKILPMHFPLHLTVPKFSLPEHLVKGESWPETLVHHWLGICQEQFDIDEYSRAVRDVKTDWNEECKSPKKGRCSGHNHVPNSLSYARDELTQSFHRLSVCVYGNNLHGNSEVNLHGCRDLGGDWAPFPHDILPYQDSGDSGSDYLFPEASEESAGIPGKSELPYEELWLEEGKPSHQPLTRSLSEKNRCDQFRGSVRSKCATSPLPIPGTLGAAVKSSDTALPPPPVPPKSEAVREECRLLNAPPVPPRSAKPLSTSPSIPPRTVKPARQQTRSPSPTLSYYSSGLHNISVTKTDTNPSESTPVSCYPCNRVKTDSVDLKSPFGSPSAEAVSSRLSWPNHYSGASESQTRSDFLLDPSRSYSYPRQKTPGTPKRNCPAPFDFDGCELLASPTSPVTAEFSSSVSGCPKSASYSLESTDVKSLAAGVTKQSTSCPALPPRAPKLVEEKVASETSPLPLKIDGAEEDPKSGSPDLSEDQYFVKKGMQDIFSASYPFSSPLHLQLAPRSCGDGSPWQPPADLSGLSIEEVSKSLRFIGLSEDVISFFVTEKIDGNLLVQLTEEILSEDFKLSKLQVKKIMQFINGWRPKI.

Residues 12 to 320 are CABIT; the sequence is KDVKWSSVAV…HLVKGESWPE (309 aa). Residues Y105 and Y453 each carry the phosphotyrosine modification. The disordered stretch occupies residues 496-572; sequence IPGTLGAAVK…SPSPTLSYYS (77 aa). The necessary for interaction with GRB2 stretch occupies residues 498–550; that stretch reads GTLGAAVKSSDTALPPPPVPPKSEAVREECRLLNAPPVPPRSAKPLSTSPSIP. The segment covering 558–572 has biased composition (polar residues); the sequence is RQQTRSPSPTLSYYS. S610 and S614 each carry phosphoserine. 2 disordered regions span residues 626–664 and 738–763; these read WPNHYSGASESQTRSDFLLDPSRSYSYPRQKTPGTPKRN and ASETSPLPLKIDGAEEDPKSGSPDLS. Polar residues-rich tracts occupy residues 631 to 640 and 648 to 658; these read SGASESQTRS and RSYSYPRQKTP. The region spanning 811–876 is the SAM domain; sequence LSIEEVSKSL…QFINGWRPKI (66 aa).

The protein belongs to the GAREM family. Isoform 1 interacts with EGFR. Isoform 1 interacts (via proline-rich domain and phosphorylated at Tyr-105 and Tyr-453) with GRB2 (via SH3 domains); the interaction occurs upon EGF stimulation. Isoform 1 interacts (phosphorylated at Tyr-453) with PTPN11; the interaction increases MAPK/ERK activity and does not affect the GRB2/SOS complex formation. Isoform 2 does not interact with GRB2. On EGF stimulation, phosphorylated on Tyr-105 and Tyr-453. In terms of tissue distribution, isoform 1 is ubiquitously expressed.

In terms of biological role, acts as an adapter protein that plays a role in intracellular signaling cascades triggered either by the cell surface activated epidermal growth factor receptor and/or cytoplasmic protein tyrosine kinases. Promotes activation of the MAPK/ERK signaling pathway. Plays a role in the regulation of cell proliferation. In Homo sapiens (Human), this protein is GRB2-associated and regulator of MAPK protein 1 (GAREM1).